The following is a 246-amino-acid chain: MRKPVIAGNWKMNMTCTEAIEYMRVLIPLLKDIPKKDREIVIAPPFTALYPLSEFIRDRNEYLSLSSQNVHWEDSGAYTAEVSPLMLNELSVKCAIVGHSEPRKYFSESDEQINKRAKSAQDHQLIPIVCVGETFQQREMGEAERVIRRQIEQGLEGIEVKRLIVAYEPIWAIGTGKTCEANEANRICGLIRKWIGYEDVIIQYGGSVKSNNIDEIMSMSDIDGVLVGGASLDPTNFARIANYEKI.

Position 9–11 (9–11 (NWK)) interacts with substrate. Catalysis depends on histidine 99, which acts as the Electrophile. Catalysis depends on glutamate 168, which acts as the Proton acceptor. Residues glycine 174, serine 207, and 228–229 (GG) each bind substrate.

Belongs to the triosephosphate isomerase family. Homodimer.

It is found in the cytoplasm. It catalyses the reaction D-glyceraldehyde 3-phosphate = dihydroxyacetone phosphate. Its pathway is carbohydrate biosynthesis; gluconeogenesis. It functions in the pathway carbohydrate degradation; glycolysis; D-glyceraldehyde 3-phosphate from glycerone phosphate: step 1/1. Its function is as follows. Involved in the gluconeogenesis. Catalyzes stereospecifically the conversion of dihydroxyacetone phosphate (DHAP) to D-glyceraldehyde-3-phosphate (G3P). This Prochlorococcus marinus (strain NATL2A) protein is Triosephosphate isomerase.